The primary structure comprises 227 residues: Enolase-phosphatase E1 (227 aa).

This sequence belongs to the HAD-like hydrolase superfamily. MasA/MtnC family. As to quaternary structure, monomer. The cofactor is Mg(2+).

It carries out the reaction 5-methylsulfanyl-2,3-dioxopentyl phosphate + H2O = 1,2-dihydroxy-5-(methylsulfanyl)pent-1-en-3-one + phosphate. It participates in amino-acid biosynthesis; L-methionine biosynthesis via salvage pathway; L-methionine from S-methyl-5-thio-alpha-D-ribose 1-phosphate: step 3/6. Its pathway is amino-acid biosynthesis; L-methionine biosynthesis via salvage pathway; L-methionine from S-methyl-5-thio-alpha-D-ribose 1-phosphate: step 4/6. Its function is as follows. Bifunctional enzyme that catalyzes the enolization of 2,3-diketo-5-methylthiopentyl-1-phosphate (DK-MTP-1-P) into the intermediate 2-hydroxy-3-keto-5-methylthiopentenyl-1-phosphate (HK-MTPenyl-1-P), which is then dephosphorylated to form the acireductone 1,2-dihydroxy-3-keto-5-methylthiopentene (DHK-MTPene). The polypeptide is Enolase-phosphatase E1 (Pseudomonas fluorescens (strain Pf0-1)).